The primary structure comprises 342 residues: MKVEDFDFDLPEELIAQTPLLDRTSSRLMVLDKESGEIKDQHFTDIISYLNKGDALVLNDTRVLPARLHGIKDETGAHIEVLLLKQKEGNAWETLVKPAKRIRKGATITFGDGALKATCLEELEHGGRILEFSYEGIFYEVLEQLGEMPLPPYIKEQLADQDRYQTVYAKENGSAAAPTAGLHFTEELLAQISAKGVEIIFVTLHVGLGTFRPVDVEDTQNHKMHSEFYRLTEESADRINKIKSAGGKVVAVGTTSIRTLETIASRHDGKLIAESGWTDIFISPGYEFQAVDALITNFHLPKSTLIMLVSALSDRTKILAAYNHAVEQQYRFFSFGDAMFIH.

It belongs to the QueA family. In terms of assembly, monomer.

The protein localises to the cytoplasm. It catalyses the reaction 7-aminomethyl-7-carbaguanosine(34) in tRNA + S-adenosyl-L-methionine = epoxyqueuosine(34) in tRNA + adenine + L-methionine + 2 H(+). The protein operates within tRNA modification; tRNA-queuosine biosynthesis. Functionally, transfers and isomerizes the ribose moiety from AdoMet to the 7-aminomethyl group of 7-deazaguanine (preQ1-tRNA) to give epoxyqueuosine (oQ-tRNA). This is S-adenosylmethionine:tRNA ribosyltransferase-isomerase from Listeria innocua serovar 6a (strain ATCC BAA-680 / CLIP 11262).